The chain runs to 199 residues: Adenylyl-sulfate kinase (199 aa).

34–41 (GLSGSGKS) is a binding site for ATP. Serine 108 (phosphoserine intermediate) is an active-site residue.

It belongs to the APS kinase family.

The enzyme catalyses adenosine 5'-phosphosulfate + ATP = 3'-phosphoadenylyl sulfate + ADP + H(+). Its pathway is sulfur metabolism; hydrogen sulfide biosynthesis; sulfite from sulfate: step 2/3. Catalyzes the synthesis of activated sulfate. The protein is Adenylyl-sulfate kinase of Staphylococcus carnosus (strain TM300).